The following is an 812-amino-acid chain: MDHKEIILLFLLFLKPGQGDSLDGYVSTQGASLHSLTKKQLAAGSIADCLAKCEGETDFICRSFQYHSKEQQCVIMAENSKTSSIIRMRDVILFEKRVYLSECKTGIGKGYRGTMSKTKTGVTCQKWSDTSPHVPKYSPSTHPSEGLEENYCRNPDNDEQGPWCYTTDPDQRYEYCNIPECEEECMYCSGEKYEGKISKTMSGLDCQSWDSQSPHAHGYIPAKFPSKNLKMNYCRNPDGEPRPWCFTTDPNKRWEYCDIPRCTTPPPPPGPTYQCLKGRGENYRGTVSVTASGKTCQRWSEQTPHRHNRTPENFPCKNLEENYCRNPDGETAPWCYTTDSQLRWEYCEIPSCGSSVSPDQSDSSVLPEQTPVVQECYQGNGKSYRGTSSTTNTGKKCQSWVSMTPHSHSKTPANFPDAGLEMNYCRNPDNDQRGPWCFTTDPSVRWEYCNLKRCSETGGGVAESAIVPQVPSAPGTSETDCMYGNGKEYRGKTAVTAAGTPCQEWAAQEPHSHRIFTPQTNPRAGLEKNYCRNPDGDVNGPWCYTMNPRKLYDYCNIPLCASLSSFECGKPQVEPKKCPGRVVGGCVANPHSWPWQISLRTRFSGQHFCGGTLISPEWVLTAAHCLEKSSRPEFYKVILGAHEERILGSDVQQIAVTKLVLEPNDADIALLKLSRPATITDNVIPACLPSPNYVVADRTLCYITGWGETKGTPGAGRLKEAQLPVIENKVCNRAEYLNNRVKSTELCAGHLAGGIDSCQGDSGGPLVCFEKDKYILQGVTSWGLGCARPNKPGVYVRVSRYVNWIEREMRND.

A signal peptide spans 1–19 (MDHKEIILLFLLFLKPGQG). The PAN domain occupies 20–98 (DSLDGYVSTQ…RDVILFEKRV (79 aa)). 21 disulfide bridges follow: cysteine 49-cysteine 73, cysteine 53-cysteine 61, cysteine 103-cysteine 181, cysteine 124-cysteine 164, cysteine 152-cysteine 176, cysteine 185-cysteine 262, cysteine 188-cysteine 316, cysteine 206-cysteine 245, cysteine 234-cysteine 257, cysteine 275-cysteine 352, cysteine 296-cysteine 335, cysteine 324-cysteine 347, cysteine 376-cysteine 454, cysteine 397-cysteine 437, cysteine 425-cysteine 449, cysteine 481-cysteine 560, cysteine 502-cysteine 543, cysteine 531-cysteine 555, cysteine 568-cysteine 687, cysteine 578-cysteine 586, and cysteine 609-cysteine 625. Kringle domains lie at 102–181 (ECKT…IPEC), 184–262 (ECMY…IPRC), 274–352 (QCLK…IPSC), 375–454 (ECYQ…LKRC), and 480–560 (DCMY…IPLC). Positions 582-810 (VVGGCVANPH…YVNWIEREMR (229 aa)) constitute a Peptidase S1 domain. Serine 598 carries the phosphoserine modification. Residues histidine 624 and aspartate 667 each act as charge relay system in the active site. Serine 690 is modified (phosphoserine). 3 cysteine pairs are disulfide-bonded: cysteine 701-cysteine 768, cysteine 731-cysteine 747, and cysteine 758-cysteine 786. Catalysis depends on serine 762, which acts as the Charge relay system.

Belongs to the peptidase S1 family. Plasminogen subfamily. In terms of assembly, interacts (both mature PLG and the angiostatin peptide) with AMOT and CSPG4. Interacts (via the Kringle domains) with HRG; the interaction tethers PLG to the cell surface and enhances its activation. Interacts (via Kringle 4 domain) with ADA; the interaction stimulates PLG activation when in complex with DPP4. Angiostatin: Interacts with ATP5F1A; the interaction inhibits most of the angiogenic effects of angiostatin. Post-translationally, in the presence of the inhibitor, the activation involves only cleavage after Arg-581, yielding two chains held together by two disulfide bonds. In the absence of the inhibitor, the activation involves additionally the removal of the activation peptide.

It is found in the secreted. The enzyme catalyses Preferential cleavage: Lys-|-Xaa &gt; Arg-|-Xaa, higher selectivity than trypsin. Converts fibrin into soluble products.. With respect to regulation, converted into plasmin by plasminogen activators, both plasminogen and its activator being bound to fibrin. Cannot be activated with streptokinase. Functionally, plasmin dissolves the fibrin of blood clots and acts as a proteolytic factor in a variety of other processes including embryonic development, tissue remodeling, tumor invasion, and inflammation. In ovulation, weakens the walls of the Graafian follicle. It activates the urokinase-type plasminogen activator, collagenases and several complement zymogens, such as C1, C4 and C5. Cleavage of fibronectin and laminin leads to cell detachment and apoptosis. Also cleaves fibrin, thrombospondin and von Willebrand factor. Its role in tissue remodeling and tumor invasion may be modulated by CSPG4. Binds to cells. Angiostatin is an angiogenesis inhibitor that blocks neovascularization and growth of experimental primary and metastatic tumors in vivo. The sequence is that of Plasminogen (Plg) from Rattus norvegicus (Rat).